The primary structure comprises 192 residues: U1 small nuclear ribonucleoprotein C (192 aa).

The segment at Tyr4–Glu36 adopts a Matrin-type zinc-finger fold. The tract at residues Pro118–Asn192 is disordered. A compositionally biased stretch (polar residues) spans Arg133–Tyr154. Over residues Asn164–Asn173 the composition is skewed to low complexity. Residues Tyr174 to Asn192 show a composition bias toward polar residues.

The protein belongs to the U1 small nuclear ribonucleoprotein C family. U1 snRNP is composed of the 7 core Sm proteins B/B', D1, D2, D3, E, F and G that assemble in a heptameric protein ring on the Sm site of the small nuclear RNA to form the core snRNP, and at least 3 U1 snRNP-specific proteins U1-70K, U1-A and U1-C. U1-C interacts with U1 snRNA and the 5' splice-site region of the pre-mRNA.

The protein localises to the nucleus. Functionally, component of the spliceosomal U1 snRNP, which is essential for recognition of the pre-mRNA 5' splice-site and the subsequent assembly of the spliceosome. U1-C is directly involved in initial 5' splice-site recognition for both constitutive and regulated alternative splicing. The interaction with the 5' splice-site seems to precede base-pairing between the pre-mRNA and the U1 snRNA. Stimulates commitment or early (E) complex formation by stabilizing the base pairing of the 5' end of the U1 snRNA and the 5' splice-site region. The polypeptide is U1 small nuclear ribonucleoprotein C (Plasmodium chabaudi chabaudi).